A 629-amino-acid polypeptide reads, in one-letter code: 1-deoxy-D-xylulose-5-phosphate synthase (629 aa).

Residues H72 and 113–115 each bind thiamine diphosphate; that span reads GHS. D144 provides a ligand contact to Mg(2+). Thiamine diphosphate-binding positions include 145-146, N173, Y284, and E366; that span reads GA. Residue N173 participates in Mg(2+) binding.

Belongs to the transketolase family. DXPS subfamily. In terms of assembly, homodimer. Mg(2+) is required as a cofactor. Thiamine diphosphate serves as cofactor.

The enzyme catalyses D-glyceraldehyde 3-phosphate + pyruvate + H(+) = 1-deoxy-D-xylulose 5-phosphate + CO2. The protein operates within metabolic intermediate biosynthesis; 1-deoxy-D-xylulose 5-phosphate biosynthesis; 1-deoxy-D-xylulose 5-phosphate from D-glyceraldehyde 3-phosphate and pyruvate: step 1/1. Catalyzes the acyloin condensation reaction between C atoms 2 and 3 of pyruvate and glyceraldehyde 3-phosphate to yield 1-deoxy-D-xylulose-5-phosphate (DXP). In Halalkalibacterium halodurans (strain ATCC BAA-125 / DSM 18197 / FERM 7344 / JCM 9153 / C-125) (Bacillus halodurans), this protein is 1-deoxy-D-xylulose-5-phosphate synthase.